Here is a 312-residue protein sequence, read N- to C-terminus: Ribosomal RNA small subunit methyltransferase H (312 aa).

Residues 34–36 (GGH), aspartate 54, phenylalanine 78, aspartate 100, and glutamine 107 contribute to the S-adenosyl-L-methionine site.

It belongs to the methyltransferase superfamily. RsmH family.

It is found in the cytoplasm. The enzyme catalyses cytidine(1402) in 16S rRNA + S-adenosyl-L-methionine = N(4)-methylcytidine(1402) in 16S rRNA + S-adenosyl-L-homocysteine + H(+). Its function is as follows. Specifically methylates the N4 position of cytidine in position 1402 (C1402) of 16S rRNA. In Salmonella choleraesuis (strain SC-B67), this protein is Ribosomal RNA small subunit methyltransferase H.